Here is a 304-residue protein sequence, read N- to C-terminus: Neurexophilin-4 (304 aa).

An N-terminal signal peptide occupies residues 1–23 (MRLLPEWLLLLFGPWLLRKVISG). An II region spans residues 24 to 84 (QIVESGRPQY…GALARPGAAG (61 aa)). Asn-72, Asn-133, Asn-143, and Asn-149 each carry an N-linked (GlcNAc...) asparagine glycan. Positions 85–163 (GPPVPRTKRK…IVPPSKRVEF (79 aa)) are III. The segment at 164–220 (GGVWLPGPAPHPLQSTLALEGVLPGLGPPLGMAGQGLGGNLGGALAGPLGGALGVPG) is IV (linker domain). The segment at 221-304 (AKESRAFNCH…NFQSEHPYFG (84 aa)) is v (Cys-rich).

Belongs to the neurexophilin family. May be proteolytically processed in neuron-like cells. As to expression, brain and kidney.

The protein resides in the secreted. May be signaling molecules that resemble neuropeptides and that act by binding to alpha-neurexins and possibly other receptors. The sequence is that of Neurexophilin-4 (Nxph4) from Rattus norvegicus (Rat).